The sequence spans 320 residues: Integrin-binding sialoprotein (320 aa).

The signal sequence occupies residues 1 to 16 (MKTALILLCILGMASA). Phosphoserine occurs at positions 31, 68, 76, 77, and 96. 3 disordered regions span residues 60–117 (PVQG…VTAS), 136–225 (LPKK…RELT), and 238–264 (FQQTTPPPEAYGTTSPPARKSSTVEYG). Over residues 67–106 (SSEENGDGDSSEEEGEEEETSNEEENNEDSEGNEDQEAEA) the composition is skewed to acidic residues. N-linked (GlcNAc...) asparagine glycosylation occurs at N108. A compositionally biased stretch (basic and acidic residues) spans 139 to 152 (KAGDAEGKAPKMKE). Position 153 is a phosphoserine (S153). Positions 153–176 (SDEEEEEEEEEENENEEAEVDENE) are enriched in acidic residues. Composition is skewed to polar residues over residues 177 to 188 (QVVNGTSTNSTE) and 249 to 261 (GTTSPPARKSSTV). N-linked (GlcNAc...) asparagine glycans are attached at residues N180 and N185. The short motif at 289-291 (RGD) is the Integrin-binding motif element. Sulfotyrosine occurs at positions 316 and 317.

Monomer. Interacts with integrins; the interaction promotes cell adhesion.

The protein resides in the secreted. In terms of biological role, binds tightly to hydroxyapatite. Appears to form an integral part of the mineralized matrix. Probably important to cell-matrix interaction. Promotes adhesion and migration of various cells via the alpha-V/beta-3 integrin receptor (ITGAV:ITGB3). The chain is Integrin-binding sialoprotein (Ibsp) from Rattus norvegicus (Rat).